We begin with the raw amino-acid sequence, 231 residues long: UMP-CMP kinase (231 aa).

57–62 (GSGKGT) serves as a coordination point for ATP. An NMP region spans residues 77–106 (SAGDLLRREIASGSAYGSVILSTIREGKIV). Residues arginine 83, 104–106 (KIV), and 131–134 (GFPR) contribute to the a ribonucleoside 5'-phosphate site. Residue asparagine 138 participates in CMP binding. Residues 169 to 177 (NRNQGRVDD) are LID. Arginine 170 provides a ligand contact to ATP. The a ribonucleoside 5'-phosphate site is built by arginine 174 and arginine 185. Residue glycine 213 participates in ATP binding.

It belongs to the adenylate kinase family. UMP-CMP kinase subfamily. As to quaternary structure, monomer. Mg(2+) is required as a cofactor.

The protein localises to the cytoplasm. The protein resides in the nucleus. It carries out the reaction CMP + ATP = CDP + ADP. The enzyme catalyses dCMP + ATP = dCDP + ADP. The catalysed reaction is UMP + ATP = UDP + ADP. Its function is as follows. Catalyzes the phosphorylation of pyrimidine nucleoside monophosphates at the expense of ATP. Plays an important role in de novo pyrimidine nucleotide biosynthesis. Has preference for UMP and CMP as phosphate acceptors. The chain is UMP-CMP kinase from Prunus armeniaca (Apricot).